A 188-amino-acid polypeptide reads, in one-letter code: D-glycero-beta-D-manno-heptose-1,7-bisphosphate 7-phosphatase (188 aa).

Cys-92, His-94, Cys-107, and Cys-109 together coordinate Zn(2+).

The protein belongs to the GmhB family.

It localises to the cytoplasm. It catalyses the reaction D-glycero-beta-D-manno-heptose 1,7-bisphosphate + H2O = D-glycero-beta-D-manno-heptose 1-phosphate + phosphate. Its pathway is nucleotide-sugar biosynthesis; ADP-L-glycero-beta-D-manno-heptose biosynthesis; ADP-L-glycero-beta-D-manno-heptose from D-glycero-beta-D-manno-heptose 7-phosphate: step 2/4. The protein operates within bacterial outer membrane biogenesis; LPS core biosynthesis. In terms of biological role, converts the D-glycero-beta-D-manno-heptose 1,7-bisphosphate intermediate into D-glycero-beta-D-manno-heptose 1-phosphate by removing the phosphate group at the C-7 position. This is D-glycero-beta-D-manno-heptose-1,7-bisphosphate 7-phosphatase (gmhB1) from Photorhabdus laumondii subsp. laumondii (strain DSM 15139 / CIP 105565 / TT01) (Photorhabdus luminescens subsp. laumondii).